The chain runs to 1046 residues: UDP-N-acetylglucosamine--peptide N-acetylglucosaminyltransferase 110 kDa subunit (1046 aa).

Alanine 2 is modified (N-acetylalanine). A phosphoserine; by GSK3-beta; alternate mark is found at serine 3 and serine 4. O-linked (GlcNAc) serine; alternate glycans are attached at residues serine 3 and serine 4. O-linked (GlcNAc) serine glycosylation occurs at aspartate 10. Threonine 12 carries an O-linked (GlcNAc) threonine glycan. Methionine 18 carries an O-linked (GlcNAc) serine glycan. Serine 20 carries the phosphoserine modification. One copy of the TPR 1 repeat lies at phenylalanine 21–asparagine 54. Glutamate 38 carries O-linked (GlcNAc) threonine glycosylation. O-linked (GlcNAc) serine glycosylation is found at proline 52 and glycine 56. 11 TPR repeats span residues alanine 89–phenylalanine 122, isoleucine 123–leucine 156, tyrosine 157–phenylalanine 190, alanine 191–phenylalanine 224, leucine 225–histidine 258, alanine 259–phenylalanine 292, proline 293–histidine 326, alanine 327–phenylalanine 360, alanine 361–phenylalanine 394, alanine 395–phenylalanine 428, and alanine 429–phenylalanine 462. Serine 399 carries O-linked (GlcNAc) serine; by autocatalysis glycosylation. Threonine 454 is subject to Phosphothreonine; by AMPK. The stretch at proline 463–leucine 473 is one TPR 13; truncated repeat. Residues aspartate 464–tyrosine 466 carry the DFP motif motif. The Nuclear localization signal signature appears at lysine 487 to proline 503. The Proton acceptor role is filled by histidine 508. UDP contacts are provided by residues glutamine 849, lysine 852, alanine 906–lysine 908, histidine 911–arginine 914, histidine 930–threonine 932, and aspartate 935. Tyrosine 989 bears the Phosphotyrosine mark. The segment at lysine 991 to lysine 1010 is required for phosphatidylinositol 3,4,5-triphosphate binding.

This sequence belongs to the glycosyltransferase 41 family. O-GlcNAc transferase subfamily. As to quaternary structure, monomer; may exist in different oligomerization states in cells. Homotrimer, oligomerizes via TPR repeats 6 and 7. Trimerization is not necessary for activity in vitro, however it increases affinity for UDP-GlcNAc. Component of a THAP1/THAP3-HCFC1-OGT complex. Component of the NSL complex at least composed of MOF/KAT8, KANSL1, KANSL2, KANSL3, MCRS1, PHF20, OGT1/OGT, WDR5 and HCFC1. Found in a complex with KIF5B, RHOT1, RHOT2 and TRAK1. Found in a complex composed of at least SINHCAF, SIN3A, HDAC1, SAP30, RBBP4, OGT and TET1. Component of a complex composed of KMT2E/MLL5 (isoform 3), OGT (isoform 1) and USP7; the complex stabilizes KMT2E/MLL5, preventing KMT2E/MLL5 ubiquitination and proteasomal-mediated degradation. Interacts (via TPRs 1-6) with SIN3A; the interaction mediates transcriptional repression in parallel with histone deacetylase. Interacts (via TPR 5-6) with TET1, TET2 and TET3. Interacts (via TPR repeats 6 and 7) with ATXN10. Interacts with NSD2. Interacts with PROSER1; this interaction mediates TET2 O-GlcNAcylation and stability by promoting the interaction between OGT and TET2. Interacts with USP7. In terms of assembly, (Microbial infection) Interacts with human T-cell leukemia virus 1/HTLV-1 protein Tax; this interaction increases Tax interacting partner CREB1 O-GlcNAcylation. In terms of processing, ubiquitinated by the SCF(FBXO31) complex, leading to its proteasomal degradation. Phosphorylation on Ser-3 or Ser-4 by GSK3-beta positively regulates its activity. Phosphorylation at Thr-454 by AMPK promotes nuclear localization. Post-translationally, glycosylated via autocatalysis; O-GlcNAcylation at Ser-399 promotes nuclear localization. In terms of processing, glycosylated via autocatalysis; does not affect the enzyme activity but regulates substrate selectivity. Highly expressed in pancreas and to a lesser extent in skeletal muscle, heart, brain and placenta. Present in trace amounts in lung and liver.

It is found in the nucleus. It localises to the cytoplasm. Its subcellular location is the mitochondrion. The protein localises to the membrane. The protein resides in the cell membrane. It is found in the mitochondrion membrane. It localises to the cell projection. It catalyses the reaction L-seryl-[protein] + UDP-N-acetyl-alpha-D-glucosamine = 3-O-(N-acetyl-beta-D-glucosaminyl)-L-seryl-[protein] + UDP + H(+). The catalysed reaction is L-threonyl-[protein] + UDP-N-acetyl-alpha-D-glucosamine = 3-O-(N-acetyl-beta-D-glucosaminyl)-L-threonyl-[protein] + UDP + H(+). It functions in the pathway protein modification; protein glycosylation. With respect to regulation, subject to product inhibition by UDP. Functionally, catalyzes the transfer of a single N-acetylglucosamine from UDP-GlcNAc to a serine or threonine residue in cytoplasmic and nuclear proteins resulting in their modification with a beta-linked N-acetylglucosamine (O-GlcNAc). Glycosylates a large and diverse number of proteins including histone H2B, AKT1, AMPK, ATG4B, CAPRIN1, EZH2, FNIP1, GSDMD, KRT7, LMNA, LMNB1, LMNB2, RPTOR, HOXA1, PFKL, KMT2E/MLL5, MAPT/TAU, TET2, RBL2, RET, NOD2 and HCFC1. Can regulate their cellular processes via cross-talk between glycosylation and phosphorylation or by affecting proteolytic processing. Involved in insulin resistance in muscle and adipocyte cells via glycosylating insulin signaling components and inhibiting the 'Thr-308' phosphorylation of AKT1, enhancing IRS1 phosphorylation and attenuating insulin signaling. Involved in glycolysis regulation by mediating glycosylation of 6-phosphofructokinase PFKL, inhibiting its activity. Plays a key role in chromatin structure by mediating O-GlcNAcylation of 'Ser-112' of histone H2B: recruited to CpG-rich transcription start sites of active genes via its interaction with TET proteins (TET1, TET2 or TET3). As part of the NSL complex indirectly involved in acetylation of nucleosomal histone H4 on several lysine residues. O-GlcNAcylation of 'Ser-75' of EZH2 increases its stability, and facilitating the formation of H3K27me3 by the PRC2/EED-EZH2 complex. Stabilizes KMT2E/MLL5 by mediating its glycosylation, thereby preventing KMT2E/MLL5 ubiquitination. Regulates circadian oscillation of the clock genes and glucose homeostasis in the liver. Stabilizes clock proteins BMAL1 and CLOCK through O-glycosylation, which prevents their ubiquitination and subsequent degradation. Promotes the CLOCK-BMAL1-mediated transcription of genes in the negative loop of the circadian clock such as PER1/2 and CRY1/2. O-glycosylates HCFC1 and regulates its proteolytic processing and transcriptional activity. Component of a THAP1/THAP3-HCFC1-OGT complex that is required for the regulation of the transcriptional activity of RRM1. Regulates mitochondrial motility in neurons by mediating glycosylation of TRAK1. Promotes autophagy by mediating O-glycosylation of ATG4B. Acts as a regulator of mTORC1 signaling by mediating O-glycosylation of RPTOR and FNIP1: O-GlcNAcylation of RPTOR in response to glucose sufficiency promotes activation of the mTORC1 complex. In terms of biological role, the mitochondrial isoform (mOGT) is cytotoxic and triggers apoptosis in several cell types including INS1, an insulinoma cell line. Its function is as follows. Has N-acetylglucosaminyltransferase activity: glycosylates proteins, such as HNRNPU, NEUROD1, NUP62 and PDCD6IP. Displays specific substrate selectivity compared to other isoforms. The sequence is that of UDP-N-acetylglucosamine--peptide N-acetylglucosaminyltransferase 110 kDa subunit from Homo sapiens (Human).